We begin with the raw amino-acid sequence, 314 residues long: Aspartate carbamoyltransferase catalytic subunit (314 aa).

Residues Arg55 and Thr56 each coordinate carbamoyl phosphate. Lys83 is a binding site for L-aspartate. The carbamoyl phosphate site is built by Arg105, His134, and Gln137. L-aspartate contacts are provided by Arg167 and Arg221. Carbamoyl phosphate is bound by residues Gly262 and Pro263.

Belongs to the aspartate/ornithine carbamoyltransferase superfamily. ATCase family. As to quaternary structure, heterododecamer (2C3:3R2) of six catalytic PyrB chains organized as two trimers (C3), and six regulatory PyrI chains organized as three dimers (R2).

It carries out the reaction carbamoyl phosphate + L-aspartate = N-carbamoyl-L-aspartate + phosphate + H(+). The protein operates within pyrimidine metabolism; UMP biosynthesis via de novo pathway; (S)-dihydroorotate from bicarbonate: step 2/3. Functionally, catalyzes the condensation of carbamoyl phosphate and aspartate to form carbamoyl aspartate and inorganic phosphate, the committed step in the de novo pyrimidine nucleotide biosynthesis pathway. The polypeptide is Aspartate carbamoyltransferase catalytic subunit (Corynebacterium urealyticum (strain ATCC 43042 / DSM 7109)).